The following is a 258-amino-acid chain: uncharacterized protein (258 aa).

Belongs to the IIV-6 219L family.

This is an uncharacterized protein from Aedes vexans (Inland floodwater mosquito).